The primary structure comprises 328 residues: Cytochrome f (328 aa).

The N-terminal stretch at 1–44 (MRTFNFLSFPQVHRQALVKAVLVAIATVSLLLTSDVINPQSAQA) is a signal peptide. Residues Y45, C66, C69, and H70 each coordinate heme. Residues 294–314 (IKGLVLFLGGIMLCQILLVIK) form a helical membrane-spanning segment.

The protein belongs to the cytochrome f family. The 4 large subunits of the cytochrome b6-f complex are cytochrome b6, subunit IV (17 kDa polypeptide, PetD), cytochrome f and the Rieske protein, while the 4 small subunits are PetG, PetL, PetM and PetN. The complex functions as a dimer. Heme is required as a cofactor.

The protein localises to the cellular thylakoid membrane. In terms of biological role, component of the cytochrome b6-f complex, which mediates electron transfer between photosystem II (PSII) and photosystem I (PSI), cyclic electron flow around PSI, and state transitions. In Microcystis aeruginosa (strain NIES-843 / IAM M-2473), this protein is Cytochrome f.